A 338-amino-acid chain; its full sequence is Nicotinate-nucleotide--dimethylbenzimidazole phosphoribosyltransferase (338 aa).

Glu305 functions as the Proton acceptor in the catalytic mechanism.

It belongs to the CobT family.

It catalyses the reaction 5,6-dimethylbenzimidazole + nicotinate beta-D-ribonucleotide = alpha-ribazole 5'-phosphate + nicotinate + H(+). It participates in nucleoside biosynthesis; alpha-ribazole biosynthesis; alpha-ribazole from 5,6-dimethylbenzimidazole: step 1/2. In terms of biological role, catalyzes the synthesis of alpha-ribazole-5'-phosphate from nicotinate mononucleotide (NAMN) and 5,6-dimethylbenzimidazole (DMB). The polypeptide is Nicotinate-nucleotide--dimethylbenzimidazole phosphoribosyltransferase (Sinorhizobium fredii (strain NBRC 101917 / NGR234)).